The sequence spans 97 residues: DNA-binding protein NEQ150 (97 aa).

This sequence belongs to the PDCD5 family.

This chain is DNA-binding protein NEQ150, found in Nanoarchaeum equitans (strain Kin4-M).